Here is a 127-residue protein sequence, read N- to C-terminus: Small ribosomal subunit protein uS12 (127 aa).

Aspartate 89 is subject to 3-methylthioaspartic acid. Positions 101-127 (ALDTSGVAGRTQRRSKYGAKRPKEAKK) are disordered. Residues 111–127 (TQRRSKYGAKRPKEAKK) show a composition bias toward basic residues.

This sequence belongs to the universal ribosomal protein uS12 family. As to quaternary structure, part of the 30S ribosomal subunit. Contacts proteins S8 and S17. May interact with IF1 in the 30S initiation complex.

Its function is as follows. With S4 and S5 plays an important role in translational accuracy. In terms of biological role, interacts with and stabilizes bases of the 16S rRNA that are involved in tRNA selection in the A site and with the mRNA backbone. Located at the interface of the 30S and 50S subunits, it traverses the body of the 30S subunit contacting proteins on the other side and probably holding the rRNA structure together. The combined cluster of proteins S8, S12 and S17 appears to hold together the shoulder and platform of the 30S subunit. The protein is Small ribosomal subunit protein uS12 of Flavobacterium psychrophilum (strain ATCC 49511 / DSM 21280 / CIP 103535 / JIP02/86).